The primary structure comprises 216 residues: Urease accessory protein UreG (216 aa).

Gly-25 to Thr-32 provides a ligand contact to GTP.

It belongs to the SIMIBI class G3E GTPase family. UreG subfamily. In terms of assembly, homodimer. UreD, UreF and UreG form a complex that acts as a GTP-hydrolysis-dependent molecular chaperone, activating the urease apoprotein by helping to assemble the nickel containing metallocenter of UreC. The UreE protein probably delivers the nickel.

The protein localises to the cytoplasm. Its function is as follows. Facilitates the functional incorporation of the urease nickel metallocenter. This process requires GTP hydrolysis, probably effectuated by UreG. In Burkholderia pseudomallei (strain 1710b), this protein is Urease accessory protein UreG.